Consider the following 473-residue polypeptide: MSDFMTEQEFRIEHDTMGEVKVPAKALWQAQTQRAVENFPISGRGLESAQIRAMGLLKAACAQVNKDSGALDAEKADAIIAAGKEIASGKHDAEFPIDVFQTGSGTSSNMNTNEVIASIAKANGVEVHPNDHVNMGQSSNDTFPTATHVAATEAAVNDLIPGLKVLHESLAKKANEWSEVVKSGRTHLMDAVPVTLGQEFGGYARQIQLGIERVEATLPRLGELAIGGTAAGTGINTSADFGGKVVAELINLTDVKELKEAENHFEAQAARDALVEFSGAMRVIAVSLYKIANDIRLMGSGPLTGLGEIRLPDLQPGSSIMPGKVNPVLCETATQVSAQVIGNDAAVAFSGTQGQFELNVFIPVMARNVLESARLLANTSRVFATRLVDGIEPNEAHMKELAESSPSIVTPLNSAIGYEAAAKVAKTALAEGKTIRQTVIDLGLVDGEKLTEEELDKRLDVLAMAHTERENKF.

Residues 104–106, 128–131, 138–140, and T186 each bind substrate; these read SGT, HPND, and SSN. The active-site Proton donor/acceptor is H187. Residue S318 is part of the active site. Substrate contacts are provided by residues S319 and 324-326; that span reads KVN.

Belongs to the class-II fumarase/aspartase family. Fumarase subfamily. As to quaternary structure, homotetramer.

Its subcellular location is the cytoplasm. It carries out the reaction (S)-malate = fumarate + H2O. It participates in carbohydrate metabolism; tricarboxylic acid cycle; (S)-malate from fumarate: step 1/1. In terms of biological role, involved in the TCA cycle. Catalyzes the stereospecific interconversion of fumarate to L-malate. This Corynebacterium glutamicum (strain ATCC 13032 / DSM 20300 / JCM 1318 / BCRC 11384 / CCUG 27702 / LMG 3730 / NBRC 12168 / NCIMB 10025 / NRRL B-2784 / 534) protein is Fumarate hydratase class II.